We begin with the raw amino-acid sequence, 231 residues long: Allergen Ani s 10 (231 aa).

The N-terminal stretch at 1-19 (MHLITALVLLLQLIHFITS) is a signal peptide. 7 consecutive repeat copies span residues 28-56 (GGPG…QQNI), 57-85 (GGPG…QENI), 86-114 (GGPG…QQSI), 115-143 (EGPG…QQSI), 144-172 (EGPG…QQNI), 173-201 (GGPG…QQNI), and 204-231 (GGPG…SMQA). The tract at residues 28–201 (GGPGPVVGGS…NEQAAEQQNI (174 aa)) is 6 X 29 AA tandem repeats of [EG]-G-P-G-P-V-[IV]-[SG]-G-S-G-I-G-[ND]-V-W-[NE]-K-A-N-E-[QP]-A-[AE]-[QEH]-Q-[EQ]-[NS]-I. 2 disordered regions span residues 107–126 (QAAH…GSGI) and 134–231 (NEQA…SMQA). Low complexity-rich tracts occupy residues 114 to 123 (IEGPGPVVSG), 143 to 152 (IEGPGPVVSG), and 177 to 187 (PVISGSGIGNV).

This chain is Allergen Ani s 10, found in Anisakis simplex (Herring worm).